A 249-amino-acid chain; its full sequence is ATP synthase subunit a (249 aa).

5 helical membrane-spanning segments follow: residues 35-55 (ILLTSWFVIALILLAAFISSL), 92-112 (VPFIGTLFLFIFVSNWSGALV), 131-151 (INTTVALALLTSIAYFYAGIS), 187-209 (LFGNILADELVVGVLVLLVPLFI), and 221-241 (SAIQALIFATLAANYIGEALE).

Belongs to the ATPase A chain family. As to quaternary structure, F-type ATPases have 2 components, CF(1) - the catalytic core - and CF(0) - the membrane proton channel. CF(1) has five subunits: alpha(3), beta(3), gamma(1), delta(1), epsilon(1). CF(0) has four main subunits: a, b, b' and c.

The protein localises to the cellular thylakoid membrane. Functionally, key component of the proton channel; it plays a direct role in the translocation of protons across the membrane. In Trichodesmium erythraeum (strain IMS101), this protein is ATP synthase subunit a.